The chain runs to 105 residues: Large ribosomal subunit protein uL24 (105 aa).

This sequence belongs to the universal ribosomal protein uL24 family. Part of the 50S ribosomal subunit.

Functionally, one of two assembly initiator proteins, it binds directly to the 5'-end of the 23S rRNA, where it nucleates assembly of the 50S subunit. In terms of biological role, one of the proteins that surrounds the polypeptide exit tunnel on the outside of the subunit. This is Large ribosomal subunit protein uL24 from Leptothrix cholodnii (strain ATCC 51168 / LMG 8142 / SP-6) (Leptothrix discophora (strain SP-6)).